The sequence spans 666 residues: Endogenous retrovirus group K member 21 Gag polyprotein (666 aa).

G2 is lipidated: N-myristoyl glycine. 2 disordered regions span residues 165–189 and 217–264; these read GKGP…AGQV and ELQY…GSEL. The segment covering 232–247 has biased composition (pro residues); that stretch reads GMPPAPQGRAPYPQPP. 2 consecutive CCHC-type zinc fingers follow at residues 544 to 561 and 580 to 597; these read GKCY…NCPV and DLCP…QCRS. The disordered stretch occupies residues 598 to 641; that stretch reads KFDKNGQPLSGNEQRGQPQAPQQTGAFPIQPFVPQGFQGQQPPL. A compositionally biased stretch (polar residues) spans 604 to 622; the sequence is QPLSGNEQRGQPQAPQQTG. The segment covering 624–640 has biased composition (low complexity); it reads FPIQPFVPQGFQGQQPP.

It belongs to the beta type-B retroviral Gag protein family. HERV class-II K(HML-2) gag subfamily. In terms of processing, myristoylation is essential for retroviral assembly. Alteration of the glycine residue leads to a block in the budding of particles and an accumulation of Gag inside the cell. Specific enzymatic cleavages may yield mature proteins.

It is found in the cell membrane. Its function is as follows. The products of the Gag polyproteins of infectious retroviruses perform highly complex orchestrated tasks during the assembly, budding, maturation, and infection stages of the viral replication cycle. During viral assembly, the proteins form membrane associations and self-associations that ultimately result in budding of an immature virion from the infected cell. Gag precursors also function during viral assembly to selectively bind and package two plus strands of genomic RNA. Endogenous Gag proteins may have kept, lost or modified their original function during evolution. The protein is Endogenous retrovirus group K member 21 Gag polyprotein (ERVK-21) of Homo sapiens (Human).